Consider the following 279-residue polypeptide: Large ribosomal subunit protein uL2 (279 aa).

2 disordered regions span residues 29–53 (PEKS…TTRH) and 224–279 (VAMN…KKRK). Over residues 253–268 (KEGRTRHPNKESDKLI) the composition is skewed to basic and acidic residues. Residues 269–279 (VRRRNAGKKRK) are compositionally biased toward basic residues.

Belongs to the universal ribosomal protein uL2 family. As to quaternary structure, part of the 50S ribosomal subunit. Forms a bridge to the 30S subunit in the 70S ribosome.

One of the primary rRNA binding proteins. Required for association of the 30S and 50S subunits to form the 70S ribosome, for tRNA binding and peptide bond formation. It has been suggested to have peptidyltransferase activity; this is somewhat controversial. Makes several contacts with the 16S rRNA in the 70S ribosome. This chain is Large ribosomal subunit protein uL2, found in Leifsonia xyli subsp. xyli (strain CTCB07).